Reading from the N-terminus, the 184-residue chain is Adenine phosphoribosyltransferase 2 (184 aa).

The protein belongs to the purine/pyrimidine phosphoribosyltransferase family. Homodimer.

It localises to the cytoplasm. The catalysed reaction is AMP + diphosphate = 5-phospho-alpha-D-ribose 1-diphosphate + adenine. Its pathway is purine metabolism; AMP biosynthesis via salvage pathway; AMP from adenine: step 1/1. Functionally, catalyzes a salvage reaction resulting in the formation of AMP, that is energically less costly than de novo synthesis. In Rhizobium etli (strain ATCC 51251 / DSM 11541 / JCM 21823 / NBRC 15573 / CFN 42), this protein is Adenine phosphoribosyltransferase 2.